A 745-amino-acid polypeptide reads, in one-letter code: Probable xyloglucan glycosyltransferase 3 (745 aa).

Helical transmembrane passes span 116–136 (GFLLLSLAMLAFETVAHLKGW) and 196–216 (IDYIAWAIQKLSGFCIALFMV). The active site involves D300. Residues D359 and D361 each coordinate substrate. D453 is an active-site residue. The next 4 helical transmembrane spans lie at 531-551 (LILPFYSFTLFCVILPLTMFV), 556-576 (LPIWVICYVPVIMSVLNILPA), 695-715 (IFKKELALAFLLLTAATRSLL), and 720-740 (LHFYFLLFQGVTFLAVGLDLI).

This sequence belongs to the glycosyltransferase 2 family. Plant cellulose synthase-like C subfamily.

It is found in the golgi apparatus membrane. In terms of biological role, probable beta-1,4-glucan synthase rather involved in the synthesis of the xyloglucan backbone than cellulose. Seems to work simultaneously with xyloglucan 6-xylosyltransferase. Xyloglucan is a noncellulosic polysaccharides of plant cell wall and consists of a glucan backbone substituted by xylose, galactose and fucose. The polypeptide is Probable xyloglucan glycosyltransferase 3 (CSLC3) (Oryza sativa subsp. japonica (Rice)).